The chain runs to 313 residues: Formimidoylglutamase (313 aa).

Mn(2+) is bound by residues H130, D155, H157, D159, D241, and D243.

Belongs to the arginase family. It depends on Mn(2+) as a cofactor.

The enzyme catalyses N-formimidoyl-L-glutamate + H2O = formamide + L-glutamate. It participates in amino-acid degradation; L-histidine degradation into L-glutamate; L-glutamate from N-formimidoyl-L-glutamate (hydrolase route): step 1/1. Catalyzes the conversion of N-formimidoyl-L-glutamate to L-glutamate and formamide. The protein is Formimidoylglutamase of Salmonella arizonae (strain ATCC BAA-731 / CDC346-86 / RSK2980).